A 288-amino-acid polypeptide reads, in one-letter code: Stress response protein YhaX (288 aa).

The polypeptide is Stress response protein YhaX (yhaX) (Bacillus subtilis (strain 168)).